The primary structure comprises 398 residues: Growth-regulating factor 3 (398 aa).

Residues 1–17 are compositionally biased toward low complexity; sequence MDLQLKQWRSQQQQQHQ. The disordered stretch occupies residues 1 to 32; sequence MDLQLKQWRSQQQQQHQTESEEQPSAAKIPKH. The QLQ domain occupies 76–111; sequence FFSWAQWQELELQALIYRYMLAGAAVPQELLLPIKK. One can recognise a WRC domain in the interval 144–188; it reads DPEPGRCRRTDGKKWRCSRDVFAGHKYCERHMHRGRNRSRKPVET. Short sequence motifs (bipartite nuclear localization signal) lie at residues 149-159 and 177-184; these read RCRRTDGKKWR and RGRNRSRK. Composition is skewed to polar residues over residues 299 to 350 and 383 to 398; these read SLQE…RDQQ and PTSV…QAFH. Residues 299 to 398 are disordered; sequence SLQEADNSSS…QLGVSTQAFH (100 aa).

It belongs to the GRF family. As to expression, strongly expressed in actively growing and developing tissues, such as roots, upper stems, and shoot tips containing the shoot apical meristem (SAM) and flower buds. Also expressed in mature flowers, but weakly expressed in mature stems and leaves.

The protein localises to the nucleus. Its function is as follows. Transcription activator that plays a role in the regulation of cell expansion in leaf and cotyledons tissues. Component of a network formed by miR396, the GRFs and their interacting factors (GIFs) acting in the regulation of meristem function, at least partially through the control of cell proliferation. microRNA396-GRF1/GRF3 regulatory module acts as a developmental regulator in the reprogramming of root cells during cyst nematode infection, leading to the formation of the syncytium. The chain is Growth-regulating factor 3 (GRF3) from Arabidopsis thaliana (Mouse-ear cress).